We begin with the raw amino-acid sequence, 480 residues long: Glutamate--tRNA ligase (480 aa).

Residues 21-31 (PSPTGYLHVGG) carry the 'HIGH' region motif. Cys110, Cys112, Cys137, and His139 together coordinate Zn(2+). The 'KMSKS' region signature appears at 248-252 (KLSKR). Residue Lys251 participates in ATP binding.

Belongs to the class-I aminoacyl-tRNA synthetase family. Glutamate--tRNA ligase type 1 subfamily. Monomer. Requires Zn(2+) as cofactor.

It localises to the cytoplasm. The catalysed reaction is tRNA(Glu) + L-glutamate + ATP = L-glutamyl-tRNA(Glu) + AMP + diphosphate. Functionally, catalyzes the attachment of glutamate to tRNA(Glu) in a two-step reaction: glutamate is first activated by ATP to form Glu-AMP and then transferred to the acceptor end of tRNA(Glu). This is Glutamate--tRNA ligase from Haemophilus influenzae (strain ATCC 51907 / DSM 11121 / KW20 / Rd).